Reading from the N-terminus, the 35-residue chain is 30 kDa neutral phosphatase (35 aa).

Over residues 1 to 28 the composition is skewed to polar residues; it reads KSSAEVQQTQQASIPASQKANLGNQNNI. Residues 1 to 35 are disordered; it reads KSSAEVQQTQQASIPASQKANLGNQNNIMXVAXYQ.

In terms of biological role, highly cationic enzyme that can bind human or rat immunoglobulins as well as serum albumin, and could therefore be involved in post-infectious sequelae. This chain is 30 kDa neutral phosphatase, found in Staphylococcus aureus.